Consider the following 279-residue polypeptide: Glutamate racemase (279 aa).

Substrate-binding positions include 13–14 and 45–46; these read DS and YG. Cysteine 76 functions as the Proton donor/acceptor in the catalytic mechanism. Substrate is bound at residue 77–78; the sequence is NT. The Proton donor/acceptor role is filled by cysteine 185. 186–187 is a binding site for substrate; it reads TH.

It belongs to the aspartate/glutamate racemases family.

The enzyme catalyses L-glutamate = D-glutamate. It functions in the pathway cell wall biogenesis; peptidoglycan biosynthesis. Its function is as follows. Provides the (R)-glutamate required for cell wall biosynthesis. The polypeptide is Glutamate racemase (Synechocystis sp. (strain ATCC 27184 / PCC 6803 / Kazusa)).